The following is a 118-amino-acid chain: Small ribosomal subunit protein uS13 (118 aa).

The interval 94-118 is disordered; the sequence is SLPLRGQRTKTNARTRKGPRKPIRK.

Belongs to the universal ribosomal protein uS13 family. Part of the 30S ribosomal subunit. Forms a loose heterodimer with protein S19. Forms two bridges to the 50S subunit in the 70S ribosome.

In terms of biological role, located at the top of the head of the 30S subunit, it contacts several helices of the 16S rRNA. In the 70S ribosome it contacts the 23S rRNA (bridge B1a) and protein L5 of the 50S subunit (bridge B1b), connecting the 2 subunits; these bridges are implicated in subunit movement. Contacts the tRNAs in the A and P-sites. The polypeptide is Small ribosomal subunit protein uS13 (Shewanella baltica (strain OS223)).